The sequence spans 453 residues: Ribosomal protein uS12 methylthiotransferase RimO (453 aa).

The region spanning 6 to 116 (PKVGFVSLGC…VMEAVHEALP (111 aa)) is the MTTase N-terminal domain. The [4Fe-4S] cluster site is built by C15, C51, C80, C147, C151, and C154. Residues 133 to 370 (LTPRHYAYLK…MEKQAQISAA (238 aa)) enclose the Radical SAM core domain. Positions 373–441 (EAKIGTVQQC…EHDLYGDALP (69 aa)) constitute a TRAM domain.

Belongs to the methylthiotransferase family. RimO subfamily. It depends on [4Fe-4S] cluster as a cofactor.

The protein localises to the cytoplasm. The catalysed reaction is L-aspartate(89)-[ribosomal protein uS12]-hydrogen + (sulfur carrier)-SH + AH2 + 2 S-adenosyl-L-methionine = 3-methylsulfanyl-L-aspartate(89)-[ribosomal protein uS12]-hydrogen + (sulfur carrier)-H + 5'-deoxyadenosine + L-methionine + A + S-adenosyl-L-homocysteine + 2 H(+). Functionally, catalyzes the methylthiolation of an aspartic acid residue of ribosomal protein uS12. The protein is Ribosomal protein uS12 methylthiotransferase RimO of Stenotrophomonas maltophilia (strain K279a).